The primary structure comprises 508 residues: Histidine ammonia-lyase (508 aa).

Positions 143 to 145 (ASG) form a cross-link, 5-imidazolinone (Ala-Gly). Residue S144 is modified to 2,3-didehydroalanine (Ser).

Belongs to the PAL/histidase family. Contains an active site 4-methylidene-imidazol-5-one (MIO), which is formed autocatalytically by cyclization and dehydration of residues Ala-Ser-Gly.

The protein resides in the cytoplasm. It catalyses the reaction L-histidine = trans-urocanate + NH4(+). Its pathway is amino-acid degradation; L-histidine degradation into L-glutamate; N-formimidoyl-L-glutamate from L-histidine: step 1/3. The polypeptide is Histidine ammonia-lyase (Anaeromyxobacter sp. (strain K)).